The chain runs to 205 residues: MSKRVQAKHKLDRRMGQNIWGRPKSPVNRREYGPGQHGQRRKGKMSDFGTQLRAKQKLKGYYGNITEKQFRRYYAEAIRLRGDSGENLIGLLERRLDAVVYRSKFVATPFAARQFVNHGHIKVNGRRVNIPSYQVKAGDVIEVKEASRQLEIVVVASQLAERDVPDYIEVDHQKMSARVTRIPGLSEVPYPVQMEPNLVIEFYSR.

A compositionally biased stretch (basic residues) spans 1–12 (MSKRVQAKHKLD). The interval 1-49 (MSKRVQAKHKLDRRMGQNIWGRPKSPVNRREYGPGQHGQRRKGKMSDFG) is disordered. One can recognise an S4 RNA-binding domain in the interval 94–155 (RRLDAVVYRS…ASRQLEIVVV (62 aa)).

It belongs to the universal ribosomal protein uS4 family. Part of the 30S ribosomal subunit. Contacts protein S5. The interaction surface between S4 and S5 is involved in control of translational fidelity.

In terms of biological role, one of the primary rRNA binding proteins, it binds directly to 16S rRNA where it nucleates assembly of the body of the 30S subunit. With S5 and S12 plays an important role in translational accuracy. The sequence is that of Small ribosomal subunit protein uS4 from Methylorubrum populi (strain ATCC BAA-705 / NCIMB 13946 / BJ001) (Methylobacterium populi).